A 95-amino-acid polypeptide reads, in one-letter code: UPF0213 protein YPK_3712 (95 aa).

In terms of domain architecture, GIY-YIG spans 4-79 (SLWHLYLLRT…KQLSKQQKEK (76 aa)).

This sequence belongs to the UPF0213 family.

The sequence is that of UPF0213 protein YPK_3712 from Yersinia pseudotuberculosis serotype O:3 (strain YPIII).